Reading from the N-terminus, the 79-residue chain is Large ribosomal subunit protein uL30 (79 aa).

This sequence belongs to the universal ribosomal protein uL30 family. As to quaternary structure, part of the 50S ribosomal subunit.

The protein is Large ribosomal subunit protein uL30 of Anaeromyxobacter sp. (strain Fw109-5).